The sequence spans 179 residues: uncharacterized protein (179 aa).

The N-terminal stretch at 1 to 26 (MKKNMILFFGILKKLLICILKMEIKC) is a signal peptide.

This is an uncharacterized protein from Acheta domesticus (House cricket).